A 350-amino-acid polypeptide reads, in one-letter code: Probable dual-specificity RNA methyltransferase RlmN (350 aa).

The active-site Proton acceptor is the Glu-98. One can recognise a Radical SAM core domain in the interval 104–334 (HTYGNSVCVS…VTVRRELGGD (231 aa)). Cys-111 and Cys-339 are oxidised to a cystine. The [4Fe-4S] cluster site is built by Cys-118, Cys-122, and Cys-125. S-adenosyl-L-methionine contacts are provided by residues 165–166 (GE), Ser-197, 220–222 (SLH), and Asn-296. Cys-339 acts as the S-methylcysteine intermediate in catalysis.

Belongs to the radical SAM superfamily. RlmN family. [4Fe-4S] cluster is required as a cofactor.

The protein resides in the cytoplasm. It carries out the reaction adenosine(2503) in 23S rRNA + 2 reduced [2Fe-2S]-[ferredoxin] + 2 S-adenosyl-L-methionine = 2-methyladenosine(2503) in 23S rRNA + 5'-deoxyadenosine + L-methionine + 2 oxidized [2Fe-2S]-[ferredoxin] + S-adenosyl-L-homocysteine. The catalysed reaction is adenosine(37) in tRNA + 2 reduced [2Fe-2S]-[ferredoxin] + 2 S-adenosyl-L-methionine = 2-methyladenosine(37) in tRNA + 5'-deoxyadenosine + L-methionine + 2 oxidized [2Fe-2S]-[ferredoxin] + S-adenosyl-L-homocysteine. Specifically methylates position 2 of adenine 2503 in 23S rRNA and position 2 of adenine 37 in tRNAs. This is Probable dual-specificity RNA methyltransferase RlmN from Desulforamulus reducens (strain ATCC BAA-1160 / DSM 100696 / MI-1) (Desulfotomaculum reducens).